Here is a 457-residue protein sequence, read N- to C-terminus: DNA repair protein RadA (457 aa).

The C4-type zinc-finger motif lies at 12–29 (CQACGYESAKWMGKCPNC). 97–104 (GDPGIGKS) lines the ATP pocket. The RadA KNRFG motif motif lies at 254–258 (KNRFG). The lon-protease-like stretch occupies residues 353-457 (DAYLKAAGGV…GEALKKALPD (105 aa)).

This sequence belongs to the RecA family. RadA subfamily.

In terms of biological role, DNA-dependent ATPase involved in processing of recombination intermediates, plays a role in repairing DNA breaks. Stimulates the branch migration of RecA-mediated strand transfer reactions, allowing the 3' invading strand to extend heteroduplex DNA faster. Binds ssDNA in the presence of ADP but not other nucleotides, has ATPase activity that is stimulated by ssDNA and various branched DNA structures, but inhibited by SSB. Does not have RecA's homology-searching function. In Listeria monocytogenes serovar 1/2a (strain ATCC BAA-679 / EGD-e), this protein is DNA repair protein RadA.